The following is a 312-amino-acid chain: DNA-directed RNA polymerase subunit alpha (312 aa).

The alpha N-terminal domain (alpha-NTD) stretch occupies residues 1 to 226 (MIEFEKPIIT…EHLNLFTDLT (226 aa)). Positions 243–312 (DEKVLDRTIE…DLGLGLKNDK (70 aa)) are alpha C-terminal domain (alpha-CTD).

This sequence belongs to the RNA polymerase alpha chain family. As to quaternary structure, homodimer. The RNAP catalytic core consists of 2 alpha, 1 beta, 1 beta' and 1 omega subunit. When a sigma factor is associated with the core the holoenzyme is formed, which can initiate transcription.

The catalysed reaction is RNA(n) + a ribonucleoside 5'-triphosphate = RNA(n+1) + diphosphate. In terms of biological role, DNA-dependent RNA polymerase catalyzes the transcription of DNA into RNA using the four ribonucleoside triphosphates as substrates. The sequence is that of DNA-directed RNA polymerase subunit alpha from Streptococcus mutans serotype c (strain ATCC 700610 / UA159).